The following is a 313-amino-acid chain: Dimethyladenosine transferase (313 aa).

The interval 1–21 (MPKVKSGAIGRRRGRQEQRRE) is disordered. S-adenosyl-L-methionine contacts are provided by His-37, Leu-39, Gly-64, Glu-85, Asp-113, and Asn-128.

The protein belongs to the class I-like SAM-binding methyltransferase superfamily. rRNA adenine N(6)-methyltransferase family. In terms of assembly, part of the small subunit (SSU) processome, composed of more than 70 proteins and the RNA chaperone small nucleolar RNA (snoRNA) U3.

Its subcellular location is the nucleus. It is found in the nucleoplasm. The protein localises to the nucleolus. It carries out the reaction adenosine(1779)/adenosine(1780) in 18S rRNA + 4 S-adenosyl-L-methionine = N(6)-dimethyladenosine(1779)/N(6)-dimethyladenosine(1780) in 18S rRNA + 4 S-adenosyl-L-homocysteine + 4 H(+). Its function is as follows. Specifically dimethylates two adjacent adenosines in the loop of a conserved hairpin near the 3'-end of 18S rRNA in the 40S particle. Involved in the pre-rRNA processing steps leading to small-subunit rRNA production independently of its RNA-modifying catalytic activity. Part of the small subunit (SSU) processome, first precursor of the small eukaryotic ribosomal subunit. During the assembly of the SSU processome in the nucleolus, many ribosome biogenesis factors, an RNA chaperone and ribosomal proteins associate with the nascent pre-rRNA and work in concert to generate RNA folding, modifications, rearrangements and cleavage as well as targeted degradation of pre-ribosomal RNA by the RNA exosome. The sequence is that of Dimethyladenosine transferase (DIMT1) from Macaca fascicularis (Crab-eating macaque).